The following is a 206-amino-acid chain: N-(5'-phosphoribosyl)anthranilate isomerase (206 aa).

The protein belongs to the TrpF family.

The catalysed reaction is N-(5-phospho-beta-D-ribosyl)anthranilate = 1-(2-carboxyphenylamino)-1-deoxy-D-ribulose 5-phosphate. The protein operates within amino-acid biosynthesis; L-tryptophan biosynthesis; L-tryptophan from chorismate: step 3/5. This chain is N-(5'-phosphoribosyl)anthranilate isomerase, found in Citrifermentans bemidjiense (strain ATCC BAA-1014 / DSM 16622 / JCM 12645 / Bem) (Geobacter bemidjiensis).